The primary structure comprises 498 residues: Serine hydroxymethyltransferase, mitochondrial (498 aa).

An N6-(pyridoxal phosphate)lysine modification is found at K273.

It belongs to the SHMT family. In terms of assembly, homotetramer. The cofactor is pyridoxal 5'-phosphate.

It localises to the mitochondrion. The enzyme catalyses (6R)-5,10-methylene-5,6,7,8-tetrahydrofolate + glycine + H2O = (6S)-5,6,7,8-tetrahydrofolate + L-serine. It functions in the pathway one-carbon metabolism; tetrahydrofolate interconversion. Functionally, interconversion of serine and glycine. The sequence is that of Serine hydroxymethyltransferase, mitochondrial (SHM1) from Kluyveromyces lactis (strain ATCC 8585 / CBS 2359 / DSM 70799 / NBRC 1267 / NRRL Y-1140 / WM37) (Yeast).